A 104-amino-acid chain; its full sequence is uncharacterized protein (104 aa).

The chain crosses the membrane as a helical span at residues 81 to 97 (CLLMLPCISVVMSISSV).

The protein resides in the cell membrane. This is an uncharacterized protein from Bacillus subtilis (strain 168).